Here is an 8797-residue protein sequence, read N- to C-terminus: Nesprin-1 (8797 aa).

Residues 1-289 (MATSRGASRC…KHYPDIHNAS (289 aa)) are actin-binding. The Cytoplasmic portion of the chain corresponds to 1–8746 (MATSRGASRC…GRGFLFRVLR (8746 aa)). Calponin-homology (CH) domains follow at residues 27-134 (IVQK…LYFQ) and 178-283 (GNAK…KHYP). Spectrin repeat units follow at residues 314 to 397 (REDR…SRLF), 398 to 502 (DWHI…HLMK), 503 to 609 (MEFL…SMLE), 610 to 703 (EVIS…YAQA), 704 to 815 (DEMD…QLLI), 816 to 923 (PLEE…KHVE), 924 to 1024 (TNSR…HLKI), 1025 to 1122 (DVEK…LMED), 1123 to 1246 (PDKW…NSLE), 1247 to 1335 (ELIS…ERRI), 1336 to 1444 (QVTL…MEMV), 1445 to 1550 (KTKW…ILGH), 1551 to 1653 (LSQQ…LENL), 1654 to 1763 (LAHW…LQSV), 1764 to 1879 (VAEH…SHAS), 1880 to 1976 (LSGI…ADAL), 1977 to 2081 (AVLK…QGQC), 2082 to 2195 (CGLI…LRVS), 2196 to 2303 (LSIW…KDFT), 2304 to 2401 (AQST…KTQA), 2402 to 2513 (SLQE…LQDC), 2514 to 2619 (ASEL…LRSC), 2620 to 2731 (QVAL…LESV), 2732 to 2838 (ISQW…VEEI), 2839 to 2962 (VKDH…SGQV), 2963 to 3062 (AQLE…QNKE), 3063 to 3171 (QILQ…LENL), 3172 to 3275 (KIQM…VSRL), 3276 to 3387 (DRIV…LEGA), 3388 to 3490 (LSKW…SEKL), 3491 to 3593 (VRLH…RTQF), 3594 to 3720 (NNVV…YSDW), 3721 to 3814 (YGST…LEKG), 3815 to 3920 (LHLA…LEAK), 3921 to 4028 (VKDH…QRMY), 4029 to 4139 (QSLE…KHLK), 4140 to 4235 (SELW…REED), 4236 to 4339 (LQRT…IQVS), 4340 to 4451 (VTNL…LNKA), 4452 to 4560 (LSEK…LEKN), 4561 to 4669 (LVSR…VQEA), 4670 to 4776 (ILAR…LEDT), 4777 to 4882 (TSAY…CESR), 4883 to 4991 (MVQS…LTEI), 4992 to 5099 (YSQC…LQRC), 5100 to 5209 (TAQW…LEDA), 5210 to 5318 (VDEW…GKLV), 5319 to 5424 (KQEL…EQSK), 5425 to 5522 (ATSQ…LSKL), 5523 to 5630 (NQAA…LQDA), 5631 to 5736 (AKDM…MQEA), and 5737 to 5842 (VVQY…PSAH). A coiled-coil region spans residues 314 to 8666 (REDRVIFKEM…EKLLDVSSSQ (8353 aa)). At serine 732 the chain carries Phosphoserine. A Phosphothreonine modification is found at threonine 2270. Serine 5657 bears the Phosphoserine mark. Residues 5859-5886 (PVTEESGEEGTNSEISSPPACRSPSPVA) form a disordered region. Spectrin repeat units lie at residues 5962–6071 (LERQ…LEEK), 6072–6178 (LNDQ…SLLE), 6374–6485 (RQSI…RLQQ), 6486–6581 (ILNF…RSGL), 6582–6691 (NQNL…LETW), 6692–6795 (SHLD…TILK), 6796–6902 (HWTR…QEKL), 6903–7020 (HQLQ…LEGL), 7021–7128 (LESW…LKSV), 7129–7237 (LDQW…SKAL), 7238–7350 (LQLW…LQAG), 7351–7454 (VLDY…LQSF), 7455–7558 (LLQH…RGII), 7559–7671 (DSQI…LAFL), 7672–7783 (LKDW…NEWA), 7784–7883 (VFSE…LKET), 7884–7997 (LVAV…IEET), 7998–8106 (WRLW…LKHF), and 8107–8216 (IGQR…LPLP). Phosphoserine is present on serine 8223. The segment at 8246–8279 (DSLLSPQPSSNLSLSLAQPLRSERSGRDTPASVD) is disordered. The span at 8247 to 8265 (SLLSPQPSSNLSLSLAQPL) shows a compositional bias: low complexity. At threonine 8274 the chain carries Phosphothreonine. Residues serine 8277, serine 8280, and serine 8305 each carry the phosphoserine modification. 3 Spectrin repeats span residues 8329–8438 (SALE…MKQN), 8439–8548 (LQKW…LQDA), and 8549–8666 (LMQC…SSSQ). Phosphothreonine is present on threonine 8360. Residues 8671–8734 (SWSSADELDT…DSSLSEPGPG (64 aa)) form a disordered region. Polar residues-rich tracts occupy residues 8680-8696 (TSGS…PNRQ) and 8704-8729 (SLSQ…SSLS). Residues 8738–8797 (RGFLFRVLRAALPLQLLLLLLIGLACLVPMSEEDYSCALSNNFARSFHPMLRYTNGPPPL) form the KASH domain. Residues 8747–8767 (AALPLQLLLLLLIGLACLVPM) traverse the membrane as a helical; Anchor for type IV membrane protein segment. Topologically, residues 8768–8797 (SEEDYSCALSNNFARSFHPMLRYTNGPPPL) are perinuclear space.

The protein belongs to the nesprin family. As to quaternary structure, core component of LINC complexes which are composed of inner nuclear membrane SUN domain-containing proteins coupled to outer nuclear membrane KASH domain-containing nesprins. SUN and KASH domain-containing proteins seem to bind each other promiscuously; however, differentially expression of LINC complex constituents can give rise to specific assemblies. At least SUN1/2-containing core LINC complexes are proposed to be hexameric composed of three protomers of each KASH and SUN domain-containing protein. The SUN2:SYNE1/KASH1 LINC complex is a heterohexamer; the homotrimeric cloverleave-like conformation of the SUN domain is a prerequisite for LINC complex formation in which three separate SYNE1/KASH1 peptides bind at the interface of adjacent SUN domains. Self-associates. Interacts with SYNE3. Interacts with SPAG4/SUN4. May interact with MUSK. Interacts with F-actin via its N-terminal domain. Interacts with EMD and LMNA in vitro. Interacts (via KASH domain) with TMEM258. The disulfid bond with SUN1 or SUN2 is required for stability of the respective LINC complex under tensile forces. Expressed in HeLa, A431, A172 and HaCaT cells (at protein level). Widely expressed. Highly expressed in skeletal and smooth muscles, heart, spleen, peripheral blood leukocytes, pancreas, cerebellum, stomach, kidney and placenta. Isoform GSRP-56 is predominantly expressed in heart and skeletal muscle (at protein level).

The protein resides in the nucleus outer membrane. The protein localises to the nucleus. It localises to the nucleus envelope. Its subcellular location is the cytoplasm. It is found in the cytoskeleton. The protein resides in the myofibril. The protein localises to the sarcomere. It localises to the golgi apparatus. Functionally, multi-isomeric modular protein which forms a linking network between organelles and the actin cytoskeleton to maintain the subcellular spatial organization. As a component of the LINC (LInker of Nucleoskeleton and Cytoskeleton) complex involved in the connection between the nuclear lamina and the cytoskeleton. The nucleocytoplasmic interactions established by the LINC complex play an important role in the transmission of mechanical forces across the nuclear envelope and in nuclear movement and positioning. May be involved in nucleus-centrosome attachment and nuclear migration in neural progenitors implicating LINC complex association with SUN1/2 and probably association with cytoplasmic dynein-dynactin motor complexes; SYNE1 and SYNE2 may act redundantly. Required for centrosome migration to the apical cell surface during early ciliogenesis. May be involved in nuclear remodeling during sperm head formation in spermatogenesis; a probable SUN3:SYNE1/KASH1 LINC complex may tether spermatid nuclei to posterior cytoskeletal structures such as the manchette. The protein is Nesprin-1 of Homo sapiens (Human).